The following is a 152-amino-acid chain: Probable prefoldin subunit 5 (152 aa).

This sequence belongs to the prefoldin subunit alpha family. Heterohexamer of two PFD-alpha type and four PFD-beta type subunits.

Functionally, binds specifically to cytosolic chaperonin (c-CPN) and transfers target proteins to it. Binds to nascent polypeptide chain and promotes folding in an environment in which there are many competing pathways for nonnative proteins. The protein is Probable prefoldin subunit 5 (pfd-5) of Caenorhabditis elegans.